We begin with the raw amino-acid sequence, 579 residues long: Adenine deaminase (579 aa).

Belongs to the metallo-dependent hydrolases superfamily. Adenine deaminase family. Mn(2+) serves as cofactor.

It catalyses the reaction adenine + H2O + H(+) = hypoxanthine + NH4(+). The sequence is that of Adenine deaminase from Listeria welshimeri serovar 6b (strain ATCC 35897 / DSM 20650 / CCUG 15529 / CIP 8149 / NCTC 11857 / SLCC 5334 / V8).